We begin with the raw amino-acid sequence, 718 residues long: Potassium channel KAT1 (718 aa).

The Cytoplasmic portion of the chain corresponds to 1–60; sequence MTQAHSKSCFHQFWDGLQIKRSSDSFTVELLPSLGATINHSNKLQKFIISPYDPRYRSWE. A helical transmembrane segment spans residues 61–81; sequence LFLIVLVVYSAWICPFELAFL. Topologically, residues 82–88 are extracellular; sequence RDLPSKL. A helical membrane pass occupies residues 89–109; the sequence is LLVENIVDIFFAIDIVLTFFV. Over 110 to 132 the chain is Cytoplasmic; it reads AYVDSKTHLLVDDRKRIAMRYLS. Residues 133–153 traverse the membrane as a helical segment; it reads TWFIFDVCSTAPFQPIILLFT. The Extracellular segment spans residues 154–162; the sequence is HKGNDIAFK. Residues 163-183 form a helical; Voltage-sensor membrane-spanning segment; it reads VLNLLRLWRLHRVSSLFARLE. The Cytoplasmic segment spans residues 184–197; it reads KDIRFNYFWTRCSK. Residues 198-218 form a helical membrane-spanning segment; sequence LISVTLFAVHCAGCFNYMIAD. The Extracellular segment spans residues 219–245; sequence RYPNPEKTWIGAVMSTFRSESLWTRYI. Residues 246–265 constitute an intramembrane region (pore-forming); the sequence is TALYWSITTLTTTGYGDLHA. Topologically, residues 266-269 are extracellular; that stretch reads ENPT. The helical transmembrane segment at 270–290 threads the bilayer; that stretch reads EMLFDIVYMMFNLGLTAYLIG. Residues 291–718 are Cytoplasmic-facing; it reads NMTNLVVHGT…DGDHLFLLEM (428 aa). 374–493 contributes to the a nucleoside 3',5'-cyclic phosphate binding site; the sequence is LFNGVSGNFI…NILMNNLVQK (120 aa). Residues 560 to 584 form a disordered region; sequence EATRSSASENENSSMTDKEENHDEV. Polar residues predominate over residues 562-574; that stretch reads TRSSASENENSSM. Positions 575–584 are enriched in basic and acidic residues; the sequence is TDKEENHDEV. A KHA domain is found at 647–718; sequence RVTIHKYRHN…DGDHLFLLEM (72 aa).

The protein belongs to the potassium channel family. Plant (TC 1.A.1.4) subfamily.

Its subcellular location is the membrane. In terms of biological role, probable inward-rectifying potassium channel. Assuming opened or closed conformations in response to the voltage difference across the membrane, the channel is activated by hyperpolarization. This Oryza sativa subsp. japonica (Rice) protein is Potassium channel KAT1.